Reading from the N-terminus, the 1041-residue chain is DNA polymerase catalytic subunit (1041 aa).

Residues 1-23 (MAFFNPYFKSKNKGSDMPPKQSM) are disordered.

This sequence belongs to the DNA polymerase type-B family.

The protein resides in the host nucleus. The catalysed reaction is DNA(n) + a 2'-deoxyribonucleoside 5'-triphosphate = DNA(n+1) + diphosphate. It catalyses the reaction Endonucleolytic cleavage to 5'-phosphomonoester.. In terms of biological role, replicates viral genomic DNA. The replication complex is composed of six viral proteins: the DNA polymerase, processivity factor, primase, primase-associated factor, helicase, and ssDNA-binding protein. Additionally, the polymerase contains an intrinsic ribonuclease H (RNase H) activity that specifically degrades RNA/DNA heteroduplexes or duplex DNA substrates in the 5' to 3' direction. Therefore, it can catalyze the excision of the RNA primers that initiate the synthesis of Okazaki fragments at a replication fork during viral DNA replication. This is DNA polymerase catalytic subunit from Elephantid herpesvirus 1 (isolate Asian elephant/Berlin/Kiba/1998) (EIHV-1).